The primary structure comprises 487 residues: Protein nucleotidyltransferase YdiU (487 aa).

Residues glycine 90, glycine 92, arginine 93, lysine 113, aspartate 125, glycine 126, arginine 176, and arginine 183 each contribute to the ATP site. The Proton acceptor role is filled by aspartate 252. Mg(2+) contacts are provided by asparagine 253 and aspartate 262. Aspartate 262 lines the ATP pocket.

Belongs to the SELO family. Requires Mg(2+) as cofactor. Mn(2+) is required as a cofactor.

The catalysed reaction is L-seryl-[protein] + ATP = 3-O-(5'-adenylyl)-L-seryl-[protein] + diphosphate. It catalyses the reaction L-threonyl-[protein] + ATP = 3-O-(5'-adenylyl)-L-threonyl-[protein] + diphosphate. The enzyme catalyses L-tyrosyl-[protein] + ATP = O-(5'-adenylyl)-L-tyrosyl-[protein] + diphosphate. It carries out the reaction L-histidyl-[protein] + UTP = N(tele)-(5'-uridylyl)-L-histidyl-[protein] + diphosphate. The catalysed reaction is L-seryl-[protein] + UTP = O-(5'-uridylyl)-L-seryl-[protein] + diphosphate. It catalyses the reaction L-tyrosyl-[protein] + UTP = O-(5'-uridylyl)-L-tyrosyl-[protein] + diphosphate. Functionally, nucleotidyltransferase involved in the post-translational modification of proteins. It can catalyze the addition of adenosine monophosphate (AMP) or uridine monophosphate (UMP) to a protein, resulting in modifications known as AMPylation and UMPylation. This Pseudomonas syringae pv. tomato (strain ATCC BAA-871 / DC3000) protein is Protein nucleotidyltransferase YdiU.